We begin with the raw amino-acid sequence, 352 residues long: Cyclin-dependent kinase-like 1 (352 aa).

Positions 4–287 (YEKIGKIGEG…CEQLLQHPYF (284 aa)) constitute a Protein kinase domain. ATP contacts are provided by residues 10-18 (IGEGSYGVV) and Lys-33. A [NKR]KIAxRE motif is present at residues 45-51 (KKIALRE). Catalysis depends on Asp-126, which acts as the Proton acceptor.

This sequence belongs to the protein kinase superfamily. CMGC Ser/Thr protein kinase family. CDC2/CDKX subfamily.

The protein localises to the cytoplasm. It localises to the nucleus. It carries out the reaction L-seryl-[protein] + ATP = O-phospho-L-seryl-[protein] + ADP + H(+). The enzyme catalyses L-threonyl-[protein] + ATP = O-phospho-L-threonyl-[protein] + ADP + H(+). This is Cyclin-dependent kinase-like 1 from Mus musculus (Mouse).